The primary structure comprises 222 residues: Triosephosphate isomerase (222 aa).

10–12 (NCK) lines the substrate pocket. Histidine 93 acts as the Electrophile in catalysis. Glutamate 141 acts as the Proton acceptor in catalysis. Substrate is bound by residues isoleucine 146, glycine 180, and 201 to 202 (AS).

Belongs to the triosephosphate isomerase family. In terms of assembly, homotetramer; dimer of dimers.

Its subcellular location is the cytoplasm. It catalyses the reaction D-glyceraldehyde 3-phosphate = dihydroxyacetone phosphate. Its pathway is carbohydrate biosynthesis; gluconeogenesis. It participates in carbohydrate degradation; glycolysis; D-glyceraldehyde 3-phosphate from glycerone phosphate: step 1/1. Involved in the gluconeogenesis. Catalyzes stereospecifically the conversion of dihydroxyacetone phosphate (DHAP) to D-glyceraldehyde-3-phosphate (G3P). The sequence is that of Triosephosphate isomerase from Cenarchaeum symbiosum (strain A).